Reading from the N-terminus, the 171-residue chain is MHQVISATTNPAKIQAILQAFEEIFGEGSCHITPVAVESGVPEQPFGSEETRAGARNRVDNARRLHPQADFWVAIEAGIDDDATFSWVVIDNGVQRGEARSATLPLPAVILDRVRQGEALGPVMSQYTGIDEIGRKEGAIGVFTAGKLTRSSVYYQAVILALSPFHNAVYR.

8–13 is a binding site for substrate; the sequence is TTNPAK. Mg(2+)-binding residues include glutamate 38 and glutamine 68.

It belongs to the YjjX NTPase family. As to quaternary structure, homodimer. Requires Mg(2+) as cofactor. It depends on Mn(2+) as a cofactor.

The enzyme catalyses XTP + H2O = XDP + phosphate + H(+). The catalysed reaction is ITP + H2O = IDP + phosphate + H(+). In terms of biological role, phosphatase that hydrolyzes non-canonical purine nucleotides such as XTP and ITP to their respective diphosphate derivatives. Probably excludes non-canonical purines from DNA/RNA precursor pool, thus preventing their incorporation into DNA/RNA and avoiding chromosomal lesions. The protein is Inosine/xanthosine triphosphatase (yjjX) of Salmonella typhimurium (strain LT2 / SGSC1412 / ATCC 700720).